A 303-amino-acid polypeptide reads, in one-letter code: Formylglycine-generating enzyme (303 aa).

Residues Asn188, Ile189, Asp202, Tyr204, Asn222, Val223, Gly225, and Val227 each contribute to the Ca(2+) site. Cu(+) contacts are provided by Cys269 and Cys274.

It belongs to the sulfatase-modifying factor family. The cofactor is Cu(+).

The enzyme catalyses L-cysteinyl-[sulfatase] + 2 a thiol + O2 = an organic disulfide + 3-oxo-L-alanyl-[sulfatase] + hydrogen sulfide + H2O + H(+). Its pathway is protein modification; sulfatase oxidation. Oxidase that catalyzes the conversion of cysteine to 3-oxoalanine on target proteins. 3-oxoalanine modification, which is also named formylglycine (fGly), occurs in the maturation of arylsulfatases and some alkaline phosphatases that use the hydrated form of 3-oxoalanine as a catalytic nucleophile. This is Formylglycine-generating enzyme from Thermomonospora curvata (strain ATCC 19995 / DSM 43183 / JCM 3096 / KCTC 9072 / NBRC 15933 / NCIMB 10081 / Henssen B9).